The primary structure comprises 320 residues: MQNRKTFSWVKEQMTRSIYVSIMIYVITRASISNAYPIFAQQVYENPREATGRIVCANCHLANKPVDIEVPQAVLPDTVFEAVVRIPYDMQLKQVLANGKKGALNVGAVIILPEGFELAPPDRISPEIKEKMGNLSFQFYRPNKRNILVIGPVPGQKYSEIVFPILSPDPATKKDVHFLKYPIYVGGNRGRGQIYPDGNKSNNTVYNATSAGIVSRIARKEKGGYEITIVDASEGRQVVDIIPPGPELLVSEGESIKLDQPLTSNPNVGGFGQGDTEIVLQDPLRVQGLLFFLASVILAQIFLVLKKKQFEKVQLYEMNF.

The first 35 residues, 1 to 35 (MQNRKTFSWVKEQMTRSIYVSIMIYVITRASISNA), serve as a signal peptide directing secretion. Heme-binding residues include tyrosine 36, cysteine 56, cysteine 59, and histidine 60. Residues 286–306 (VQGLLFFLASVILAQIFLVLK) form a helical membrane-spanning segment.

Belongs to the cytochrome f family. As to quaternary structure, the 4 large subunits of the cytochrome b6-f complex are cytochrome b6, subunit IV (17 kDa polypeptide, petD), cytochrome f and the Rieske protein, while the 4 small subunits are PetG, PetL, PetM and PetN. The complex functions as a dimer. Heme is required as a cofactor.

It localises to the plastid. The protein resides in the chloroplast thylakoid membrane. Its function is as follows. Component of the cytochrome b6-f complex, which mediates electron transfer between photosystem II (PSII) and photosystem I (PSI), cyclic electron flow around PSI, and state transitions. This Phalaenopsis aphrodite subsp. formosana (Moth orchid) protein is Cytochrome f.